Consider the following 499-residue polypeptide: Glycerol kinase (499 aa).

ADP is bound at residue Thr13. Residues Thr13, Thr14, and Ser15 each coordinate ATP. Thr13 is a sn-glycerol 3-phosphate binding site. Arg17 is a binding site for ADP. 4 residues coordinate sn-glycerol 3-phosphate: Arg83, Glu84, Tyr135, and Asp244. Arg83, Glu84, Tyr135, Asp244, and Gln245 together coordinate glycerol. The ADP site is built by Thr266 and Gly309. ATP is bound by residues Thr266, Gly309, Gln313, and Gly410. ADP is bound by residues Gly410 and Asn414.

It belongs to the FGGY kinase family. Homotetramer and homodimer (in equilibrium).

The catalysed reaction is glycerol + ATP = sn-glycerol 3-phosphate + ADP + H(+). It functions in the pathway polyol metabolism; glycerol degradation via glycerol kinase pathway; sn-glycerol 3-phosphate from glycerol: step 1/1. Activated by phosphorylation and inhibited by fructose 1,6-bisphosphate (FBP). In terms of biological role, key enzyme in the regulation of glycerol uptake and metabolism. Catalyzes the phosphorylation of glycerol to yield sn-glycerol 3-phosphate. The protein is Glycerol kinase of Brevibacillus brevis (strain 47 / JCM 6285 / NBRC 100599).